A 246-amino-acid polypeptide reads, in one-letter code: MQVSYFHVAADVPDAIGSVEGPDAAVVIDVLRATTTIAWALHNGAEAVQAFADLDELRLQSRNWPEQTRLLLGERGGRMLEGFDLGNSPVAVIPEVVQGKRLFMSTTNGTRALQRVRDVSVVMTVALPNRQAVAQRLLRDQPERVWMVGSGWEGTYSLEDSLAAGALADALVAAGAQVANDELQAALALWAQWKHDPEACLRVASHGQRLTRLGNHDADFSCCAGLDQLSVVPTQTEPGVLRAIRV.

This sequence belongs to the ComB family. Requires Mg(2+) as cofactor.

It catalyses the reaction (2R)-O-phospho-3-sulfolactate + H2O = (2R)-3-sulfolactate + phosphate. This is Probable 2-phosphosulfolactate phosphatase from Synechococcus sp. (strain WH7803).